Reading from the N-terminus, the 209-residue chain is Large ribosomal subunit protein uL3 (209 aa).

The disordered stretch occupies residues 141-163; the sequence is RAVGSMGASSDPSRTFKNKRMPG.

The protein belongs to the universal ribosomal protein uL3 family. Part of the 50S ribosomal subunit. Forms a cluster with proteins L14 and L19.

Its function is as follows. One of the primary rRNA binding proteins, it binds directly near the 3'-end of the 23S rRNA, where it nucleates assembly of the 50S subunit. The polypeptide is Large ribosomal subunit protein uL3 (Clostridium botulinum (strain ATCC 19397 / Type A)).